The chain runs to 262 residues: ATP synthase subunit a (262 aa).

Transmembrane regions (helical) follow at residues 24–44 (AVHL…LFVF), 84–104 (VIAP…AIDL), 129–149 (DISA…FYTV), 194–214 (LFGN…MYMA), and 228–248 (LVWA…FMML).

It belongs to the ATPase A chain family. As to quaternary structure, F-type ATPases have 2 components, CF(1) - the catalytic core - and CF(0) - the membrane proton channel. CF(1) has five subunits: alpha(3), beta(3), gamma(1), delta(1), epsilon(1). CF(0) has three main subunits: a(1), b(2) and c(9-12). The alpha and beta chains form an alternating ring which encloses part of the gamma chain. CF(1) is attached to CF(0) by a central stalk formed by the gamma and epsilon chains, while a peripheral stalk is formed by the delta and b chains.

It localises to the cell inner membrane. Key component of the proton channel; it plays a direct role in the translocation of protons across the membrane. The chain is ATP synthase subunit a from Actinobacillus pleuropneumoniae serotype 3 (strain JL03).